Reading from the N-terminus, the 103-residue chain is Large ribosomal subunit protein bL21 (103 aa).

This sequence belongs to the bacterial ribosomal protein bL21 family. Part of the 50S ribosomal subunit. Contacts protein L20.

Its function is as follows. This protein binds to 23S rRNA in the presence of protein L20. This chain is Large ribosomal subunit protein bL21, found in Paraburkholderia phytofirmans (strain DSM 17436 / LMG 22146 / PsJN) (Burkholderia phytofirmans).